A 172-amino-acid polypeptide reads, in one-letter code: Adenine phosphoribosyltransferase (172 aa).

Belongs to the purine/pyrimidine phosphoribosyltransferase family. In terms of assembly, homodimer.

The protein resides in the cytoplasm. It carries out the reaction AMP + diphosphate = 5-phospho-alpha-D-ribose 1-diphosphate + adenine. Its pathway is purine metabolism; AMP biosynthesis via salvage pathway; AMP from adenine: step 1/1. Its function is as follows. Catalyzes a salvage reaction resulting in the formation of AMP, that is energically less costly than de novo synthesis. The chain is Adenine phosphoribosyltransferase from Anaeromyxobacter dehalogenans (strain 2CP-C).